The following is a 380-amino-acid chain: Chaperone protein DnaJ (380 aa).

In terms of domain architecture, J spans 5–70; that stretch reads DYYEVLGVAK…QKRAAYDQYG (66 aa). The CR-type zinc finger occupies 140 to 218; that stretch reads GYDTQIRVPS…CHGAGKVKET (79 aa). Cys153, Cys156, Cys170, Cys173, Cys192, Cys195, Cys206, and Cys209 together coordinate Zn(2+). CXXCXGXG motif repeat units follow at residues 153 to 160, 170 to 177, 192 to 199, and 206 to 213; these read CEVCHGSG, CPTCSGSG, CPKCHGTG, and CGHCHGAG.

It belongs to the DnaJ family. In terms of assembly, homodimer. Zn(2+) serves as cofactor.

It is found in the cytoplasm. Its function is as follows. Participates actively in the response to hyperosmotic and heat shock by preventing the aggregation of stress-denatured proteins and by disaggregating proteins, also in an autonomous, DnaK-independent fashion. Unfolded proteins bind initially to DnaJ; upon interaction with the DnaJ-bound protein, DnaK hydrolyzes its bound ATP, resulting in the formation of a stable complex. GrpE releases ADP from DnaK; ATP binding to DnaK triggers the release of the substrate protein, thus completing the reaction cycle. Several rounds of ATP-dependent interactions between DnaJ, DnaK and GrpE are required for fully efficient folding. Also involved, together with DnaK and GrpE, in the DNA replication of plasmids through activation of initiation proteins. The sequence is that of Chaperone protein DnaJ from Paraburkholderia xenovorans (strain LB400).